We begin with the raw amino-acid sequence, 206 residues long: Large ribosomal subunit protein uL4 (206 aa).

The protein belongs to the universal ribosomal protein uL4 family. In terms of assembly, part of the 50S ribosomal subunit.

One of the primary rRNA binding proteins, this protein initially binds near the 5'-end of the 23S rRNA. It is important during the early stages of 50S assembly. It makes multiple contacts with different domains of the 23S rRNA in the assembled 50S subunit and ribosome. In terms of biological role, forms part of the polypeptide exit tunnel. The chain is Large ribosomal subunit protein uL4 from Cereibacter sphaeroides (strain ATCC 17025 / ATH 2.4.3) (Rhodobacter sphaeroides).